Reading from the N-terminus, the 215-residue chain is Rod-determining factor A (215 aa).

Involved in cell-shape determination. Required for the formation of rods and wild-type-like motility. The sequence is that of Rod-determining factor A from Haloferax volcanii (strain ATCC 29605 / DSM 3757 / JCM 8879 / NBRC 14742 / NCIMB 2012 / VKM B-1768 / DS2) (Halobacterium volcanii).